The primary structure comprises 60 residues: Large ribosomal subunit protein uL30 (60 aa).

This sequence belongs to the universal ribosomal protein uL30 family. Part of the 50S ribosomal subunit.

In Finegoldia magna (strain ATCC 29328 / DSM 20472 / WAL 2508) (Peptostreptococcus magnus), this protein is Large ribosomal subunit protein uL30.